A 285-amino-acid polypeptide reads, in one-letter code: MLPLLAALLAAACPLPPARGGATDAPGLSGTPPNASANASFTGEHSTPRLLASAASAPPERAGPEEAPAAPCNISVQRQMLSSLLVRWGRPRGLQCDLLLFSTNAHGRAFFAAAFHRVGPPLLIEHLGLAAGGAQQDLRLCVGCGWVRGRLRAPAGAPTALPAYPAAEPGPLWLQGEPRHFCCLDFSLEELQGEPGWRLNRKPIESTLVACFMTLVIVVWSVAALIWPVPIIAGFLPNGMEQRRTTAGAPAAAPAAVPAGTTAAAAAAAAAAAAAAAVTSGVAPK.

The first 20 residues, 1–20 (MLPLLAALLAAACPLPPARG), serve as a signal peptide directing secretion. Residues 20 to 43 (GGATDAPGLSGTPPNASANASFTG) form a disordered region. The segment covering 31–43 (TPPNASANASFTG) has biased composition (polar residues). Asn-73 carries an N-linked (GlcNAc...) asparagine glycan. Helical transmembrane passes span 215–235 (LVIV…IAGF) and 263–283 (AAAA…SGVA).

It belongs to the TMEM158 family. Post-translationally, N-glycosylated. Detected only in the brain.

The protein localises to the membrane. In terms of biological role, receptor for brain injury-derived neurotrophic peptide (BINP), a synthetic 13-mer peptide. In Rattus norvegicus (Rat), this protein is Transmembrane protein 158 (Tmem158).